Consider the following 215-residue polypeptide: Methylthioribulose-1-phosphate dehydratase (215 aa).

Zn(2+)-binding residues include histidine 103 and histidine 105.

The protein belongs to the aldolase class II family. MtnB subfamily. It depends on Zn(2+) as a cofactor.

The catalysed reaction is 5-(methylsulfanyl)-D-ribulose 1-phosphate = 5-methylsulfanyl-2,3-dioxopentyl phosphate + H2O. The protein operates within amino-acid biosynthesis; L-methionine biosynthesis via salvage pathway; L-methionine from S-methyl-5-thio-alpha-D-ribose 1-phosphate: step 2/6. Its function is as follows. Catalyzes the dehydration of methylthioribulose-1-phosphate (MTRu-1-P) into 2,3-diketo-5-methylthiopentyl-1-phosphate (DK-MTP-1-P). The sequence is that of Methylthioribulose-1-phosphate dehydratase from Persephonella marina (strain DSM 14350 / EX-H1).